The sequence spans 532 residues: BTB/POZ domain-containing protein 3 (532 aa).

Residues 23–54 (KNRSKKSSKKTNTGGGGGGSSSSSSSSSNSKL) form a disordered region. Positions 43 to 53 (SSSSSSSSNSK) are enriched in low complexity. Positions 130–200 (ADVHFVVGPP…IYCDEIDLAA (71 aa)) constitute a BTB domain. One can recognise a BACK domain in the interval 245-310 (FEEPDLTQRC…NWAEVECQRQ (66 aa)).

Expressed in visual cortex. Expressed in visual cortex layer IV neurons.

The protein localises to the cytoplasm. Its subcellular location is the cytosol. It is found in the nucleus. Acts as a key regulator of dendritic field orientation during development of sensory cortex. Also directs dendrites toward active axon terminals when ectopically expressed. The polypeptide is BTB/POZ domain-containing protein 3 (BTBD3) (Mustela putorius furo (European domestic ferret)).